The chain runs to 583 residues: Cell division protein FtsZ (583 aa).

Residues 24–28, 111–113, Glu-142, Arg-146, and Asp-190 contribute to the GTP site; these read GGGGN and GTG. 2 disordered regions span residues 391–425 and 510–583; these read HQQPSQDFRPQSKLFASSPAEAPAALRPAQPVQQA and TNSL…RQSN. Over residues 412–425 the composition is skewed to low complexity; that stretch reads APAALRPAQPVQQA.

It belongs to the FtsZ family. In terms of assembly, homodimer. Polymerizes to form a dynamic ring structure in a strictly GTP-dependent manner. Interacts directly with several other division proteins.

The protein localises to the cytoplasm. Essential cell division protein that forms a contractile ring structure (Z ring) at the future cell division site. The regulation of the ring assembly controls the timing and the location of cell division. One of the functions of the FtsZ ring is to recruit other cell division proteins to the septum to produce a new cell wall between the dividing cells. Binds GTP and shows GTPase activity. The polypeptide is Cell division protein FtsZ (Rhizobium radiobacter (Agrobacterium tumefaciens)).